Consider the following 266-residue polypeptide: 26 kDa endochitinase 2 (266 aa).

The signal sequence occupies residues 1–23 (MRSLAVVVAVVATVAMAIGTARG). Disulfide bonds link Cys-46-Cys-108, Cys-120-Cys-128, and Cys-227-Cys-259. The active-site Proton donor is Glu-90.

It belongs to the glycosyl hydrolase 19 family. Chitinase class II subfamily.

The enzyme catalyses Random endo-hydrolysis of N-acetyl-beta-D-glucosaminide (1-&gt;4)-beta-linkages in chitin and chitodextrins.. Functionally, defense against chitin-containing fungal pathogens. The polypeptide is 26 kDa endochitinase 2 (Hordeum vulgare (Barley)).